A 563-amino-acid polypeptide reads, in one-letter code: Membrane protein insertase YidC (563 aa).

A helical membrane pass occupies residues 1-21; it reads MDIKRTILIVALAIVTYVGVL. The interval 43-62 is disordered; the sequence is APGIPDTAAGTNGSASADVP. 5 helical membrane-spanning segments follow: residues 344 to 364, 370 to 390, 440 to 460, 471 to 491, and 518 to 538; these read LELTVDYGFLWFIAQPIFWLL, ILGNWGWSIIVLTMLIKGLFF, LGGCLPILVQMPVFLSLYWVL, WILWITDLSIKDPFFILPIIM, and PIIFTFFFLWFPAGLVLYWVV.

The protein belongs to the OXA1/ALB3/YidC family. Type 1 subfamily. Interacts with the Sec translocase complex via SecD. Specifically interacts with transmembrane segments of nascent integral membrane proteins during membrane integration.

The protein resides in the cell inner membrane. Functionally, required for the insertion and/or proper folding and/or complex formation of integral membrane proteins into the membrane. Involved in integration of membrane proteins that insert both dependently and independently of the Sec translocase complex, as well as at least some lipoproteins. Aids folding of multispanning membrane proteins. In Pseudomonas syringae pv. syringae (strain B728a), this protein is Membrane protein insertase YidC.